Reading from the N-terminus, the 425-residue chain is Oxytetracycline polyketide putative beta-ketoacyl synthase 1 (425 aa).

In terms of domain architecture, Ketosynthase family 3 (KS3) spans 7–420 (ARRVVITGIG…GFQSAIVLTE (414 aa)). Catalysis depends on for beta-ketoacyl synthase activity residues Cys173, His313, and His350.

It belongs to the thiolase-like superfamily. Beta-ketoacyl-ACP synthases family.

The protein operates within antibiotic biosynthesis; oxytetracycline biosynthesis. This is Oxytetracycline polyketide putative beta-ketoacyl synthase 1 from Streptomyces rimosus.